We begin with the raw amino-acid sequence, 201 residues long: LexA repressor (201 aa).

A DNA-binding region (H-T-H motif) is located at residues 27-47 (RMEISSAFGFASPNAAEDHLK). Active-site for autocatalytic cleavage activity residues include Ser116 and Lys153.

Belongs to the peptidase S24 family. Homodimer.

The catalysed reaction is Hydrolysis of Ala-|-Gly bond in repressor LexA.. Functionally, represses a number of genes involved in the response to DNA damage (SOS response), including recA and lexA. In the presence of single-stranded DNA, RecA interacts with LexA causing an autocatalytic cleavage which disrupts the DNA-binding part of LexA, leading to derepression of the SOS regulon and eventually DNA repair. In Dechloromonas aromatica (strain RCB), this protein is LexA repressor.